A 104-amino-acid polypeptide reads, in one-letter code: MYAIVETAGRQYRVEEGKILYTERQKDYSPGDEIVFDRVVFVRKDGEVLVGKPYVEGAKVVGKVLEHAKARKVKTVKYRPRKNSKVEKGHRQWYTAIKIEKIEL.

The protein belongs to the bacterial ribosomal protein bL21 family. As to quaternary structure, part of the 50S ribosomal subunit. Contacts protein L20.

Functionally, this protein binds to 23S rRNA in the presence of protein L20. In Thermotoga sp. (strain RQ2), this protein is Large ribosomal subunit protein bL21.